The following is a 475-amino-acid chain: Ribulose bisphosphate carboxylase large chain (475 aa).

The propeptide occupies 1 to 2; sequence MA. N-acetylproline is present on proline 3. Position 14 is an N6,N6,N6-trimethyllysine (lysine 14). Residues asparagine 123 and threonine 173 each coordinate substrate. Lysine 175 (proton acceptor) is an active-site residue. Residue lysine 177 participates in substrate binding. 3 residues coordinate Mg(2+): lysine 201, aspartate 203, and glutamate 204. At lysine 201 the chain carries N6-carboxylysine. Residue histidine 294 is the Proton acceptor of the active site. Substrate-binding residues include arginine 295, histidine 327, and serine 379.

This sequence belongs to the RuBisCO large chain family. Type I subfamily. Heterohexadecamer of 8 large chains and 8 small chains; disulfide-linked. The disulfide link is formed within the large subunit homodimers. It depends on Mg(2+) as a cofactor. In terms of processing, the disulfide bond which can form in the large chain dimeric partners within the hexadecamer appears to be associated with oxidative stress and protein turnover.

It is found in the plastid. Its subcellular location is the chloroplast. It carries out the reaction 2 (2R)-3-phosphoglycerate + 2 H(+) = D-ribulose 1,5-bisphosphate + CO2 + H2O. The catalysed reaction is D-ribulose 1,5-bisphosphate + O2 = 2-phosphoglycolate + (2R)-3-phosphoglycerate + 2 H(+). Functionally, ruBisCO catalyzes two reactions: the carboxylation of D-ribulose 1,5-bisphosphate, the primary event in carbon dioxide fixation, as well as the oxidative fragmentation of the pentose substrate in the photorespiration process. Both reactions occur simultaneously and in competition at the same active site. The sequence is that of Ribulose bisphosphate carboxylase large chain from Tupiella akineta (Green alga).